The primary structure comprises 183 residues: Oleosin Bn-V (183 aa).

The interval 1–47 is polar; that stretch reads PARTHHDITTRDQYPLISRDRDQYGMIGRDQYNMSGQNYSKSRQIAK. 2 consecutive repeats follow at residues 11–20 and 21–30; these read RDQYPLISRD and RDQYGMIGRD. The segment at 48–119 is hydrophobic; it reads ATTAVTAGDS…AAITVFSWIY (72 aa). A run of 2 helical transmembrane segments spans residues 57–77 and 99–119; these read SLLV…IVAT and TGFL…SWIY. The interval 154-183 is disordered; the sequence is YGQQHTGEEHDRDRDHRTDRDRTRGTQHTT. A compositionally biased stretch (basic and acidic residues) spans 159-177; it reads TGEEHDRDRDHRTDRDRTR.

Belongs to the oleosin family.

It is found in the lipid droplet. Its subcellular location is the membrane. May have a structural role to stabilize the lipid body during desiccation of the seed by preventing coalescence of the oil. Probably interacts with both lipid and phospholipid moieties of lipid bodies. May also provide recognition signals for specific lipase anchorage in lipolysis during seedling growth. This Brassica napus (Rape) protein is Oleosin Bn-V.